We begin with the raw amino-acid sequence, 108 residues long: Monothiol bacilliredoxin BrxC (108 aa).

An S-bacillithiol cysteine disulfide modification is found at cysteine 31.

Interacts with AbrB, BdhA, Bdr, BrxB, FolD, GapA, GapB, GatA, PfkA, PyrAA, PyrAB, PyrE, PyrG, PyrH, RpsB, RpsK, RpsL, SalA, SucC, Tuf and YtsJ. Post-translationally, cys can react with bacillithiol (BSH) to form mixed disulfides. S-bacillithiolation protects Cys residues against overoxidation by acting as a redox switch in response to oxidative stress.

In terms of biological role, S-bacillithiolation is the formation of mixed disulfide bonds between protein thiols and the general thiol reductant bacillithiol (BSH) under oxidative stress. BSH is an equivalent of glutathione (GSH) in Firmicutes. This protein is a monothiol bacilliredoxin, which debacillithiolates (removes BSH) the S-bacillithiolated glyceraldehyde-3-phosphate dehydrogenases (GAPDHs) GapA and GapB in vivo and probably a number of other oxidized cytosolic proteins. Debacillithiolates the S-bacillithiolated Bdr (Bdr-SSB) and BrxB (BrxB-SSB) in vitro. Involved in maintaining redox homeostasis in response to disulfide stress conditions. The sequence is that of Monothiol bacilliredoxin BrxC from Bacillus subtilis (strain 168).